We begin with the raw amino-acid sequence, 159 residues long: Phosphopantetheine adenylyltransferase (159 aa).

Substrate is bound at residue Thr-10. ATP-binding positions include 10-11 and His-18; that span reads TF. Residues Lys-42, Met-74, and Arg-88 each contribute to the substrate site. ATP contacts are provided by residues 89-91, Glu-99, and 124-130; these read GLR and WSFISSS.

Belongs to the bacterial CoaD family. Homohexamer. It depends on Mg(2+) as a cofactor.

It localises to the cytoplasm. The catalysed reaction is (R)-4'-phosphopantetheine + ATP + H(+) = 3'-dephospho-CoA + diphosphate. Its pathway is cofactor biosynthesis; coenzyme A biosynthesis; CoA from (R)-pantothenate: step 4/5. Functionally, reversibly transfers an adenylyl group from ATP to 4'-phosphopantetheine, yielding dephospho-CoA (dPCoA) and pyrophosphate. The protein is Phosphopantetheine adenylyltransferase of Yersinia pestis.